The chain runs to 642 residues: Threonine--tRNA ligase (642 aa).

The TGS domain maps to 1-61 (MPVIRFYDGS…REDAFIEFVD (61 aa)). The catalytic stretch occupies residues 243 to 534 (DHRKIGKFLQ…LIEECSGNLP (292 aa)). 3 residues coordinate Zn(2+): Cys334, His385, and His511.

This sequence belongs to the class-II aminoacyl-tRNA synthetase family. Homodimer. Zn(2+) serves as cofactor.

Its subcellular location is the cytoplasm. It carries out the reaction tRNA(Thr) + L-threonine + ATP = L-threonyl-tRNA(Thr) + AMP + diphosphate + H(+). Its function is as follows. Catalyzes the attachment of threonine to tRNA(Thr) in a two-step reaction: L-threonine is first activated by ATP to form Thr-AMP and then transferred to the acceptor end of tRNA(Thr). Also edits incorrectly charged L-seryl-tRNA(Thr). In Buchnera aphidicola subsp. Acyrthosiphon pisum (strain 5A), this protein is Threonine--tRNA ligase.